A 901-amino-acid chain; its full sequence is Protein translocase subunit SecA (901 aa).

ATP-binding positions include Q87, 105–109 (GEGKT), and D512. Residues 859–901 (HQDDDSAAAAALAAQTGERKVGRNDPCPCGSGKKYKQCHGRLQ) are disordered. Residues C885, C887, C896, and H897 each contribute to the Zn(2+) site. The segment covering 891-901 (KKYKQCHGRLQ) has biased composition (basic residues).

This sequence belongs to the SecA family. Monomer and homodimer. Part of the essential Sec protein translocation apparatus which comprises SecA, SecYEG and auxiliary proteins SecDF-YajC and YidC. The cofactor is Zn(2+).

The protein localises to the cell inner membrane. It localises to the cytoplasm. The catalysed reaction is ATP + H2O + cellular proteinSide 1 = ADP + phosphate + cellular proteinSide 2.. Functionally, part of the Sec protein translocase complex. Interacts with the SecYEG preprotein conducting channel. Has a central role in coupling the hydrolysis of ATP to the transfer of proteins into and across the cell membrane, serving both as a receptor for the preprotein-SecB complex and as an ATP-driven molecular motor driving the stepwise translocation of polypeptide chains across the membrane. The polypeptide is Protein translocase subunit SecA (Escherichia coli O9:H4 (strain HS)).